A 308-amino-acid polypeptide reads, in one-letter code: Ribosomal RNA large subunit methyltransferase F (308 aa).

It belongs to the methyltransferase superfamily. METTL16/RlmF family.

It localises to the cytoplasm. It catalyses the reaction adenosine(1618) in 23S rRNA + S-adenosyl-L-methionine = N(6)-methyladenosine(1618) in 23S rRNA + S-adenosyl-L-homocysteine + H(+). Functionally, specifically methylates the adenine in position 1618 of 23S rRNA. The protein is Ribosomal RNA large subunit methyltransferase F of Escherichia fergusonii (strain ATCC 35469 / DSM 13698 / CCUG 18766 / IAM 14443 / JCM 21226 / LMG 7866 / NBRC 102419 / NCTC 12128 / CDC 0568-73).